A 234-amino-acid polypeptide reads, in one-letter code: Orotidine 5'-phosphate decarboxylase (234 aa).

Substrate is bound by residues Asp-17, Lys-38, 65–74, Thr-122, Arg-184, Gln-193, Gly-213, and Arg-214; that span reads DLKLHDIPNT. Lys-67 (proton donor) is an active-site residue.

Belongs to the OMP decarboxylase family. Type 1 subfamily. Homodimer.

The enzyme catalyses orotidine 5'-phosphate + H(+) = UMP + CO2. It functions in the pathway pyrimidine metabolism; UMP biosynthesis via de novo pathway; UMP from orotate: step 2/2. Functionally, catalyzes the decarboxylation of orotidine 5'-monophosphate (OMP) to uridine 5'-monophosphate (UMP). This chain is Orotidine 5'-phosphate decarboxylase, found in Thermosynechococcus vestitus (strain NIES-2133 / IAM M-273 / BP-1).